A 136-amino-acid polypeptide reads, in one-letter code: Protein NrdI (136 aa).

The protein belongs to the NrdI family.

Functionally, probably involved in ribonucleotide reductase function. This Citrobacter koseri (strain ATCC BAA-895 / CDC 4225-83 / SGSC4696) protein is Protein NrdI.